We begin with the raw amino-acid sequence, 154 residues long: 20 kDa calcium-binding protein (154 aa).

4 consecutive EF-hand domains span residues aspartate 13–threonine 48, valine 49–glutamate 84, glutamine 86–aspartate 121, and leucine 122–glutamate 154. Ca(2+) contacts are provided by aspartate 62, aspartate 64, threonine 66, aspartate 99, asparagine 101, glutamate 105, aspartate 110, aspartate 135, aspartate 137, serine 139, and glutamate 146.

Its subcellular location is the tegument membrane. Functionally, calcium-binding protein. The chain is 20 kDa calcium-binding protein (SM20) from Schistosoma mansoni (Blood fluke).